Reading from the N-terminus, the 341-residue chain is S-adenosylmethionine:tRNA ribosyltransferase-isomerase (341 aa).

This sequence belongs to the QueA family. In terms of assembly, monomer.

It localises to the cytoplasm. It carries out the reaction 7-aminomethyl-7-carbaguanosine(34) in tRNA + S-adenosyl-L-methionine = epoxyqueuosine(34) in tRNA + adenine + L-methionine + 2 H(+). Its pathway is tRNA modification; tRNA-queuosine biosynthesis. Its function is as follows. Transfers and isomerizes the ribose moiety from AdoMet to the 7-aminomethyl group of 7-deazaguanine (preQ1-tRNA) to give epoxyqueuosine (oQ-tRNA). This is S-adenosylmethionine:tRNA ribosyltransferase-isomerase from Chlorobium phaeobacteroides (strain DSM 266 / SMG 266 / 2430).